Reading from the N-terminus, the 648-residue chain is Replication protein E1 (648 aa).

The Nuclear localization signal signature appears at 83 to 85 (KRK). Phosphoserine; by host occurs at positions 89, 93, and 107. A Nuclear export signal motif is present at residues 106–115 (ISPRLDAIQL). The tract at residues 151 to 186 (YGEPENGCGGGGDGREKEGEGQVHTEVHTESEIEQH) is disordered. Basic and acidic residues predominate over residues 163–185 (DGREKEGEGQVHTEVHTESEIEQ). Residues 184–352 (EQHTGTTRVL…QTIVEHGLAD (169 aa)) are DNA-binding region. The 151-residue stretch at 451–601 (IEFISFLSKL…FPFDSNGNAV (151 aa)) folds into the SF3 helicase domain. ATP is bound at residue 477 to 484 (GPPDTGKS). Lysine 558 participates in a covalent cross-link: Glycyl lysine isopeptide (Lys-Gly) (interchain with G-Cter in SUMO).

The protein belongs to the papillomaviridae E1 protein family. Can form hexamers. Interacts with E2 protein; this interaction increases E1 DNA binding specificity. Interacts with host DNA polymerase subunit POLA2. Interacts with host single stranded DNA-binding protein RPA1. Interacts with host TOP1; this interaction stimulates the enzymatic activity of TOP1. Post-translationally, phosphorylated. Sumoylated.

The protein localises to the host nucleus. The enzyme catalyses Couples ATP hydrolysis with the unwinding of duplex DNA by translocating in the 3'-5' direction.. It carries out the reaction ATP + H2O = ADP + phosphate + H(+). Its function is as follows. ATP-dependent DNA 3'-5' helicase required for initiation of viral DNA replication. It forms a complex with the viral E2 protein. The E1-E2 complex binds to the replication origin which contains binding sites for both proteins. During the initial step, a dimer of E1 interacts with a dimer of protein E2 leading to a complex that binds the viral origin of replication with high specificity. Then, a second dimer of E1 displaces the E2 dimer in an ATP-dependent manner to form the E1 tetramer. Following this, two E1 monomers are added to each half of the site, which results in the formation of two E1 trimers on the viral ori. Subsequently, two hexamers will be created. The double hexamer acts as a bi-directional helicase machinery and unwinds the viral DNA and then recruits the host DNA polymerase to start replication. The protein is Replication protein E1 of Pygmy chimpanzee papillomavirus type 1C (PCPV-1C).